Reading from the N-terminus, the 312-residue chain is Acetaldehyde dehydrogenase (312 aa).

12-15 (SGNI) is a binding site for NAD(+). The active-site Acyl-thioester intermediate is the Cys132. NAD(+) contacts are provided by residues 163 to 171 (SAGPGTRAN) and Asn290.

The protein belongs to the acetaldehyde dehydrogenase family. In terms of assembly, heterotetramer composed of two DmpG (aldolase) and two DmpF (dehydrogenase) subunits, which allows a direct channeling of acetaldehyde between the two active sites.

It carries out the reaction acetaldehyde + NAD(+) + CoA = acetyl-CoA + NADH + H(+). It functions in the pathway aromatic compound metabolism; phenol degradation. Is not activated by Mn(2+), Mg(2+), Ca(2+), Zn(2+) or Co(2+). Functionally, catalyzes the conversion of acetaldehyde to acetyl-CoA, using NAD(+) and coenzyme A. Can also act on propanal and butanal to form propanoyl-CoA and butanoyl-CoA, respectively. Is the final enzyme in the meta-cleavage pathway for the degradation of aromatic compounds such as phenols, cresols and catechols. NADP(+) can replace NAD(+) but the rate of reaction is much slower. In Pseudomonas sp. (strain CF600), this protein is Acetaldehyde dehydrogenase (dmpF).